A 263-amino-acid chain; its full sequence is Type III pantothenate kinase (263 aa).

14–21 (DIGNTSVN) lines the ATP pocket. Residue 115 to 118 (GADR) participates in substrate binding. Asp-117 serves as the catalytic Proton acceptor. Residue Asp-137 coordinates K(+). Residue Thr-140 coordinates ATP. Position 192 (Thr-192) interacts with substrate.

It belongs to the type III pantothenate kinase family. In terms of assembly, homodimer. The cofactor is NH4(+). K(+) is required as a cofactor.

It is found in the cytoplasm. The catalysed reaction is (R)-pantothenate + ATP = (R)-4'-phosphopantothenate + ADP + H(+). It participates in cofactor biosynthesis; coenzyme A biosynthesis; CoA from (R)-pantothenate: step 1/5. Catalyzes the phosphorylation of pantothenate (Pan), the first step in CoA biosynthesis. The protein is Type III pantothenate kinase of Dehalococcoides mccartyi (strain CBDB1).